Reading from the N-terminus, the 458-residue chain is Glutamate--tRNA ligase 2 (458 aa).

The 'HIGH' region motif lies at Pro20–Asn30. Positions Gly251–Arg255 match the 'KMSKS' region motif. Position 254 (Lys254) interacts with ATP.

Belongs to the class-I aminoacyl-tRNA synthetase family. Glutamate--tRNA ligase type 1 subfamily. Monomer.

The protein resides in the cytoplasm. The enzyme catalyses tRNA(Glu) + L-glutamate + ATP = L-glutamyl-tRNA(Glu) + AMP + diphosphate. Functionally, catalyzes the attachment of glutamate to tRNA(Glu) in a two-step reaction: glutamate is first activated by ATP to form Glu-AMP and then transferred to the acceptor end of tRNA(Glu). The chain is Glutamate--tRNA ligase 2 from Xanthobacter autotrophicus (strain ATCC BAA-1158 / Py2).